The sequence spans 879 residues: Alanine--tRNA ligase (879 aa).

Zn(2+)-binding residues include His-566, His-570, Cys-668, and His-672.

This sequence belongs to the class-II aminoacyl-tRNA synthetase family. Requires Zn(2+) as cofactor.

The protein resides in the cytoplasm. It carries out the reaction tRNA(Ala) + L-alanine + ATP = L-alanyl-tRNA(Ala) + AMP + diphosphate. Functionally, catalyzes the attachment of alanine to tRNA(Ala) in a two-step reaction: alanine is first activated by ATP to form Ala-AMP and then transferred to the acceptor end of tRNA(Ala). Also edits incorrectly charged Ser-tRNA(Ala) and Gly-tRNA(Ala) via its editing domain. The chain is Alanine--tRNA ligase from Clostridium botulinum (strain Alaska E43 / Type E3).